A 1330-amino-acid chain; its full sequence is Ubinuclein-2 (1330 aa).

Residues M1–V113 form a disordered region. S13 bears the Phosphoserine mark. Composition is skewed to basic and acidic residues over residues R16–R31 and A55–R67. Residues P81–R96 are compositionally biased toward pro residues. The residue at position 229 (T229) is a Phosphothreonine. S236 carries the phosphoserine modification. Disordered stretches follow at residues S236–Y304 and D322–P345. The residue at position 238 (T238) is a Phosphothreonine. Residue K258 forms a Glycyl lysine isopeptide (Lys-Gly) (interchain with G-Cter in SUMO2) linkage. A Phosphoserine modification is found at S297. Residues S402, S405, S408, and S570 each carry the phosphoserine modification. Disordered stretches follow at residues L559–I583, N767–E789, L801–H835, G866–Q909, Y964–T991, P1021–V1202, and P1292–Q1330. The span at Q560–S570 shows a compositional bias: basic and acidic residues. Polar residues-rich tracts occupy residues N767 to T780 and S809 to L818. The span at G866 to A895 shows a compositional bias: low complexity. Polar residues-rich tracts occupy residues S899–Q909 and S969–S980. The segment covering A1030–S1044 has biased composition (pro residues). Low complexity predominate over residues P1045–S1056. The residue at position 1052 (K1052) is an N6-acetyllysine. Polar residues-rich tracts occupy residues P1073 to S1148, R1158 to R1169, and H1308 to G1317. S1107 bears the Phosphoserine mark. K1132 carries the N6-acetyllysine modification. Over residues G1321–Q1330 the composition is skewed to basic and acidic residues.

The protein belongs to the ubinuclein family.

This chain is Ubinuclein-2 (Ubn2), found in Rattus norvegicus (Rat).